A 607-amino-acid polypeptide reads, in one-letter code: Polyphenol oxidase, chloroplastic (607 aa).

The N-terminal 103 residues, 1–103 (MASLPWSLTT…LGATKPLAFG (103 aa)), are a transit peptide targeting the chloroplast. The tract at residues 39 to 73 (RNRSRRFAPSKVSCNSANGDPNSDSTSDVRETSSG) is disordered. A compositionally biased stretch (polar residues) spans 50 to 64 (VSCNSANGDPNSDST). 2 cysteine pairs are disulfide-bonded: cysteine 114/cysteine 129 and cysteine 128/cysteine 191. 6 residues coordinate Cu cation: histidine 190, histidine 211, histidine 220, histidine 342, histidine 346, and histidine 375. The segment at residues 194–211 (CQGAYDQVGYTDLELQVH) is a cross-link (2'-(S-cysteinyl)-histidine (Cys-His)).

This sequence belongs to the tyrosinase family. Requires Cu(2+) as cofactor.

It localises to the plastid. The protein resides in the chloroplast thylakoid lumen. The catalysed reaction is 2 catechol + O2 = 2 1,2-benzoquinone + 2 H2O. Its function is as follows. Catalyzes the oxidation of mono- and o-diphenols to o-diquinones. The polypeptide is Polyphenol oxidase, chloroplastic (Vitis vinifera (Grape)).